Reading from the N-terminus, the 233-residue chain is Octanoyltransferase (233 aa).

Residues 32 to 213 form the BPL/LPL catalytic domain; that stretch reads NNIDGILLLL…NFKMIFETDL (182 aa). Substrate contacts are provided by residues 77 to 84, 144 to 146, and 157 to 159; these read RGGNVTYH, AIG, and GFA. Cys-175 (acyl-thioester intermediate) is an active-site residue.

It belongs to the LipB family.

It localises to the cytoplasm. The enzyme catalyses octanoyl-[ACP] + L-lysyl-[protein] = N(6)-octanoyl-L-lysyl-[protein] + holo-[ACP] + H(+). The protein operates within protein modification; protein lipoylation via endogenous pathway; protein N(6)-(lipoyl)lysine from octanoyl-[acyl-carrier-protein]: step 1/2. Catalyzes the transfer of endogenously produced octanoic acid from octanoyl-acyl-carrier-protein onto the lipoyl domains of lipoate-dependent enzymes. Lipoyl-ACP can also act as a substrate although octanoyl-ACP is likely to be the physiological substrate. The chain is Octanoyltransferase from Clostridium kluyveri (strain ATCC 8527 / DSM 555 / NBRC 12016 / NCIMB 10680 / K1).